Reading from the N-terminus, the 342-residue chain is MMRYEDVSQLSLMNLTYEEQRLENIRKNEDLLRSLGLGAPSEATTLATPSNLKTAGNQRRYNDTLVGKSNTGRNRSDSPRKRPTKDREDLNLVPQSAIKRRQSVRLGGKEKPNYTREQVTFNSDRDTPNTPSRQIKSTHSHPGSEEEDIRQVKTRTLGVRVHNPKTFGHIPGIGVGKWWATRMEASADAVHAPTVAGISGNAHEGAWSVALSGGYPDDIDLGYAFTYTGCGGRDLKGTKQNPKNLRTAPQTSHQSFDNPLNAALKRSAETRNPVRVIRGFKLQSKYAPPTGYRYDGLYIVEKAWMAKGLTNGLMVCRYAFKRMDDQGPLPQKDLDHDDDNKA.

The segment at 41-149 (SEATTLATPS…SHPGSEEEDI (109 aa)) is disordered. The span at 42 to 59 (EATTLATPSNLKTAGNQR) shows a compositional bias: polar residues. Residues 74-90 (NRSDSPRKRPTKDREDL) are compositionally biased toward basic and acidic residues. The span at 115–141 (TREQVTFNSDRDTPNTPSRQIKSTHSH) shows a compositional bias: polar residues. The region spanning 168-322 (GHIPGIGVGK…LMVCRYAFKR (155 aa)) is the YDG domain. Residue D218 participates in DNA binding. The disordered stretch occupies residues 236–257 (KGTKQNPKNLRTAPQTSHQSFD). Positions 238-257 (TKQNPKNLRTAPQTSHQSFD) are enriched in polar residues.

Its subcellular location is the nucleus. Involved in the maintenance of DNA methylation. Binds hemimethylated DNA. The chain is UHRF1-like protein from Cryptococcus neoformans var. grubii serotype A (strain H99 / ATCC 208821 / CBS 10515 / FGSC 9487) (Filobasidiella neoformans var. grubii).